The following is a 248-amino-acid chain: uncharacterized protein (248 aa).

The region spanning 7–246 is the ABC transporter domain; it reads VQLSNLSWTF…PASTILLPTS (240 aa). 43-50 contributes to the ATP binding site; sequence GQSGSGKS.

This sequence belongs to the ABC transporter superfamily.

This is an uncharacterized protein from Mycobacterium tuberculosis (strain CDC 1551 / Oshkosh).